The sequence spans 171 residues: 3-hydroxydecanoyl-[acyl-carrier-protein] dehydratase (171 aa).

Histidine 70 is an active-site residue.

It belongs to the thioester dehydratase family. FabA subfamily. As to quaternary structure, homodimer.

The protein localises to the cytoplasm. It carries out the reaction a (3R)-hydroxyacyl-[ACP] = a (2E)-enoyl-[ACP] + H2O. The enzyme catalyses (3R)-hydroxydecanoyl-[ACP] = (2E)-decenoyl-[ACP] + H2O. It catalyses the reaction (2E)-decenoyl-[ACP] = (3Z)-decenoyl-[ACP]. The protein operates within lipid metabolism; fatty acid biosynthesis. Necessary for the introduction of cis unsaturation into fatty acids. Catalyzes the dehydration of (3R)-3-hydroxydecanoyl-ACP to E-(2)-decenoyl-ACP and then its isomerization to Z-(3)-decenoyl-ACP. Can catalyze the dehydratase reaction for beta-hydroxyacyl-ACPs with saturated chain lengths up to 16:0, being most active on intermediate chain length. The chain is 3-hydroxydecanoyl-[acyl-carrier-protein] dehydratase from Shewanella denitrificans (strain OS217 / ATCC BAA-1090 / DSM 15013).